The primary structure comprises 119 residues: Early E3 13.3 kDa protein (119 aa).

This Canine adenovirus serotype 1 (strain Utrecht) (CAdV-1) protein is Early E3 13.3 kDa protein.